The sequence spans 464 residues: tRNA modification GTPase MnmE (464 aa).

Positions 25, 87, and 130 each coordinate (6S)-5-formyl-5,6,7,8-tetrahydrofolate. Residues 226–386 (GLSVVLAGQP…LRAELLRIAG (161 aa)) enclose the TrmE-type G domain. K(+) is bound at residue asparagine 236. Residues 236–241 (NVGKSS), 255–261 (TPIAGTT), and 280–283 (DTAG) contribute to the GTP site. Residue serine 240 participates in Mg(2+) binding. Residues threonine 255, isoleucine 257, and threonine 260 each contribute to the K(+) site. Position 261 (threonine 261) interacts with Mg(2+). Lysine 464 provides a ligand contact to (6S)-5-formyl-5,6,7,8-tetrahydrofolate.

The protein belongs to the TRAFAC class TrmE-Era-EngA-EngB-Septin-like GTPase superfamily. TrmE GTPase family. Homodimer. Heterotetramer of two MnmE and two MnmG subunits. It depends on K(+) as a cofactor.

It is found in the cytoplasm. Exhibits a very high intrinsic GTPase hydrolysis rate. Involved in the addition of a carboxymethylaminomethyl (cmnm) group at the wobble position (U34) of certain tRNAs, forming tRNA-cmnm(5)s(2)U34. The chain is tRNA modification GTPase MnmE from Burkholderia orbicola (strain MC0-3).